The following is a 194-amino-acid chain: Small ribosomal subunit protein uS4c (194 aa).

An S4 RNA-binding domain is found at 84–144 (MRLDTLLYRT…KEILKSLNDK (61 aa)).

This sequence belongs to the universal ribosomal protein uS4 family. As to quaternary structure, part of the 30S ribosomal subunit. Contacts protein S5. The interaction surface between S4 and S5 is involved in control of translational fidelity.

It is found in the plastid. It localises to the chloroplast. In terms of biological role, one of the primary rRNA binding proteins, it binds directly to 16S rRNA where it nucleates assembly of the body of the 30S subunit. With S5 and S12 plays an important role in translational accuracy. This Bigelowiella natans (Pedinomonas minutissima) protein is Small ribosomal subunit protein uS4c (rps4).